We begin with the raw amino-acid sequence, 255 residues long: Isoprenyl transferase (255 aa).

Residue aspartate 35 is part of the active site. Aspartate 35 serves as a coordination point for Mg(2+). Substrate contacts are provided by residues 36–39 (GNGR), tryptophan 40, arginine 48, histidine 52, and 80–82 (STE). The active-site Proton acceptor is asparagine 83. Substrate contacts are provided by residues tryptophan 84, arginine 86, arginine 203, and 209–211 (RIS). Glutamate 222 is a binding site for Mg(2+).

It belongs to the UPP synthase family. In terms of assembly, homodimer. Requires Mg(2+) as cofactor.

In terms of biological role, catalyzes the condensation of isopentenyl diphosphate (IPP) with allylic pyrophosphates generating different type of terpenoids. This is Isoprenyl transferase from Clostridium tetani (strain Massachusetts / E88).